The chain runs to 338 residues: Ornithine carbamoyltransferase (338 aa).

Carbamoyl phosphate contacts are provided by residues 56–59, Gln-83, Arg-107, and 134–137; these read STRT and HPTQ. Residues Asn-168, Asp-232, and 236–237 each bind L-ornithine; that span reads SM. Carbamoyl phosphate is bound by residues 274–275 and Arg-320; that span reads CL.

Belongs to the aspartate/ornithine carbamoyltransferase superfamily. OTCase family.

It localises to the cytoplasm. The enzyme catalyses carbamoyl phosphate + L-ornithine = L-citrulline + phosphate + H(+). The protein operates within amino-acid biosynthesis; L-arginine biosynthesis; L-arginine from L-ornithine and carbamoyl phosphate: step 1/3. Its function is as follows. Reversibly catalyzes the transfer of the carbamoyl group from carbamoyl phosphate (CP) to the N(epsilon) atom of ornithine (ORN) to produce L-citrulline. The protein is Ornithine carbamoyltransferase of Photorhabdus laumondii subsp. laumondii (strain DSM 15139 / CIP 105565 / TT01) (Photorhabdus luminescens subsp. laumondii).